The primary structure comprises 317 residues: DNA-directed RNA polymerase subunit alpha 2 (317 aa).

The tract at residues 1-227 (MALENLLHPT…NQLRNIVDIE (227 aa)) is alpha N-terminal domain (alpha-NTD). The tract at residues 241–317 (INPILLKHVE…TLIENWPQDL (77 aa)) is alpha C-terminal domain (alpha-CTD).

This sequence belongs to the RNA polymerase alpha chain family. In terms of assembly, homodimer. The RNAP catalytic core consists of 2 alpha, 1 beta, 1 beta' and 1 omega subunit. When a sigma factor is associated with the core the holoenzyme is formed, which can initiate transcription.

The enzyme catalyses RNA(n) + a ribonucleoside 5'-triphosphate = RNA(n+1) + diphosphate. In terms of biological role, DNA-dependent RNA polymerase catalyzes the transcription of DNA into RNA using the four ribonucleoside triphosphates as substrates. The chain is DNA-directed RNA polymerase subunit alpha 2 from Francisella tularensis subsp. holarctica (strain FTNF002-00 / FTA).